The sequence spans 276 residues: Undecaprenyl-diphosphatase (276 aa).

The next 5 membrane-spanning stretches (helical) occupy residues 85–105 (MNVV…EKTI), 108–128 (VLFA…AILW), 187–207 (VATE…TLYE), 217–237 (VDSV…AFAC), and 253–273 (FAWY…SGWI).

This sequence belongs to the UppP family.

It localises to the cell inner membrane. The enzyme catalyses di-trans,octa-cis-undecaprenyl diphosphate + H2O = di-trans,octa-cis-undecaprenyl phosphate + phosphate + H(+). Catalyzes the dephosphorylation of undecaprenyl diphosphate (UPP). Confers resistance to bacitracin. This chain is Undecaprenyl-diphosphatase, found in Burkholderia mallei (strain NCTC 10247).